Consider the following 537-residue polypeptide: Small conductance calcium-activated potassium channel protein 1 (537 aa).

Polar residues predominate over residues 1–10; sequence MSSHSHNGSV. The segment at 1-90 is disordered; that stretch reads MSSHSHNGSV…GKPPTVSHRL (90 aa). Over residues 65 to 76 the composition is skewed to acidic residues; that stretch reads QEEEEEEEEEED. A helical membrane pass occupies residues 108-128; that stretch reads LIFGMFGIVVMVTETELSWGV. A helical membrane pass occupies residues 137 to 157; it reads FALKCLISLSTVILLGLVILY. Residues 176-196 traverse the membrane as a helical segment; it reads IAMTWERVSLISLELVVCAIH. A helical membrane pass occupies residues 225–245; the sequence is VLLSIPMFLRLYLLARVMLLH. The chain crosses the membrane as a helical span at residues 274-294; it reads LMTICPGTVLLVFSVSSWIVA. The pore-forming intramembrane region spans 314–334; the sequence is FLGAMWLISITFLSIGYGDMV. The segment at 343–363 is segment S6; the sequence is VCLLTGIMGAGCTALVVAVVA. A calmodulin-binding region spans residues 381-460; sequence DTQLTKRVKN…LAELAKAQSI (80 aa).

It belongs to the potassium channel KCNN family. KCa2.1/KCNN1 subfamily. As to quaternary structure, homodimer. Heteromultimer with KCNN2 and KCNN3. The complex is composed of 4 channel subunits each of which binds to a calmodulin subunit which regulates the channel activity through calcium-binding. Interacts with calmodulin. As to expression, highest expression in brain and liver with lower levels in heart, testis, kidney and colon. In colon, detected in smooth muscle cells. Expressed in atrial and ventricular myocytes with higher levels in atrial myocytes.

It localises to the membrane. The protein localises to the cytoplasm. The protein resides in the myofibril. It is found in the sarcomere. Its subcellular location is the z line. It catalyses the reaction K(+)(in) = K(+)(out). Its activity is regulated as follows. Inhibited by bee venom neurotoxin apamin. Inhibited by d-tubocurarine and tetraethylammonium (TEA). Functionally, small conductance calcium-activated potassium channel that mediates the voltage-independent transmembrane transfer of potassium across the cell membrane through a constitutive interaction with calmodulin which binds the intracellular calcium allowing its opening. The current is characterized by a voltage-independent activation, an intracellular calcium concentration increase-dependent activation and a single-channel conductance of about 3 picosiemens. Also presents an inwardly rectifying current, thus reducing its already small outward conductance of potassium ions, which is particularly the case when the membrane potential displays positive values, above + 20 mV. Activation is followed by membrane hyperpolarization. Thought to regulate neuronal excitability by contributing to the slow component of synaptic afterhyperpolarization. This chain is Small conductance calcium-activated potassium channel protein 1, found in Mus musculus (Mouse).